The following is a 192-amino-acid chain: Orotate phosphoribosyltransferase (192 aa).

Residue 116–124 (EDIVTTGLS) participates in 5-phospho-alpha-D-ribose 1-diphosphate binding. Residues Thr120 and Arg148 each contribute to the orotate site.

The protein belongs to the purine/pyrimidine phosphoribosyltransferase family. PyrE subfamily. In terms of assembly, homodimer. It depends on Mg(2+) as a cofactor.

The enzyme catalyses orotidine 5'-phosphate + diphosphate = orotate + 5-phospho-alpha-D-ribose 1-diphosphate. It participates in pyrimidine metabolism; UMP biosynthesis via de novo pathway; UMP from orotate: step 1/2. Its function is as follows. Catalyzes the transfer of a ribosyl phosphate group from 5-phosphoribose 1-diphosphate to orotate, leading to the formation of orotidine monophosphate (OMP). The polypeptide is Orotate phosphoribosyltransferase (Brucella anthropi (strain ATCC 49188 / DSM 6882 / CCUG 24695 / JCM 21032 / LMG 3331 / NBRC 15819 / NCTC 12168 / Alc 37) (Ochrobactrum anthropi)).